Consider the following 309-residue polypeptide: Protein FdhE homolog (309 aa).

This sequence belongs to the FdhE family.

Its subcellular location is the cytoplasm. In terms of biological role, necessary for formate dehydrogenase activity. This chain is Protein FdhE homolog, found in Pasteurella multocida (strain Pm70).